Here is a 114-residue protein sequence, read N- to C-terminus: Histone H2A.Z-specific chaperone chz-1 (114 aa).

The segment covering 1 to 22 (MSTENGTTDTTLAGTAEANTPF) has biased composition (polar residues). Positions 1–114 (MSTENGTTDT…FVPEDEEMEE (114 aa)) are disordered. The span at 24-40 (SKGKGKAAAESEDHPMG) shows a compositional bias: basic and acidic residues. 2 stretches are compositionally biased toward acidic residues: residues 41–68 (EAED…EEID) and 93–114 (PAEE…EMEE).

It belongs to the CHZ1 family. Forms a heterotrimer with H2A.Z-H2B, stabilizing the association of the histone dimer. Also, with a lower affinity, forms a heterotrimer with H2A-H2B.

It localises to the nucleus. In terms of biological role, forms a chaperone-bound H2A.Z-H2B complex that acts as a source for SWR1 complex-dependent H2A to H2A.Z histone replacement in chromatin. The protein is Histone H2A.Z-specific chaperone chz-1 (chz-1) of Neurospora crassa (strain ATCC 24698 / 74-OR23-1A / CBS 708.71 / DSM 1257 / FGSC 987).